The chain runs to 148 residues: UPF0756 membrane protein NMA2160 (148 aa).

4 consecutive transmembrane segments (helical) span residues L13–M35, H50–G70, F80–G100, and V121–L141.

It belongs to the UPF0756 family.

The protein resides in the cell membrane. In Neisseria meningitidis serogroup A / serotype 4A (strain DSM 15465 / Z2491), this protein is UPF0756 membrane protein NMA2160.